Reading from the N-terminus, the 454-residue chain is UDP-N-acetylmuramoylalanine--D-glutamate ligase (454 aa).

Position 117–123 (117–123 (GTNGKTT)) interacts with ATP.

Belongs to the MurCDEF family.

The protein resides in the cytoplasm. It catalyses the reaction UDP-N-acetyl-alpha-D-muramoyl-L-alanine + D-glutamate + ATP = UDP-N-acetyl-alpha-D-muramoyl-L-alanyl-D-glutamate + ADP + phosphate + H(+). It functions in the pathway cell wall biogenesis; peptidoglycan biosynthesis. In terms of biological role, cell wall formation. Catalyzes the addition of glutamate to the nucleotide precursor UDP-N-acetylmuramoyl-L-alanine (UMA). This Alkaliphilus oremlandii (strain OhILAs) (Clostridium oremlandii (strain OhILAs)) protein is UDP-N-acetylmuramoylalanine--D-glutamate ligase.